We begin with the raw amino-acid sequence, 398 residues long: tRNA-specific 2-thiouridylase MnmA (398 aa).

Residues 20 to 27 and L46 contribute to the ATP site; that span reads AMSGGVDS. The active-site Nucleophile is C114. Residues C114 and C210 are joined by a disulfide bond. Residue G138 coordinates ATP. An interaction with tRNA region spans residues 160–162; sequence RDQ. C210 acts as the Cysteine persulfide intermediate in catalysis.

It belongs to the MnmA/TRMU family.

It localises to the cytoplasm. The catalysed reaction is S-sulfanyl-L-cysteinyl-[protein] + uridine(34) in tRNA + AH2 + ATP = 2-thiouridine(34) in tRNA + L-cysteinyl-[protein] + A + AMP + diphosphate + H(+). In terms of biological role, catalyzes the 2-thiolation of uridine at the wobble position (U34) of tRNA, leading to the formation of s(2)U34. In Brucella melitensis biotype 1 (strain ATCC 23456 / CCUG 17765 / NCTC 10094 / 16M), this protein is tRNA-specific 2-thiouridylase MnmA.